A 112-amino-acid chain; its full sequence is Nitrogen regulatory protein P-II (112 aa).

Tyr51 bears the O-UMP-tyrosine mark.

Belongs to the P(II) protein family. As to quaternary structure, homotrimer.

Its function is as follows. In nitrogen-limiting conditions, when the ratio of Gln to 2-ketoglutarate decreases, P-II is uridylylated to P-II-UMP. P-II-UMP allows the deadenylation of glutamine synthetase (GS), thus activating the enzyme. Conversely, in nitrogen excess P-II is deuridylated and promotes the adenylation of GS. P-II indirectly controls the transcription of the GS gene (glnA). P-II prevents NR-II-catalyzed conversion of NR-I to NR-I-phosphate, the transcriptional activator of glnA. When P-II is uridylylated to P-II-UMP, these events are reversed. The protein is Nitrogen regulatory protein P-II (glnB) of Mesorhizobium japonicum (strain LMG 29417 / CECT 9101 / MAFF 303099) (Mesorhizobium loti (strain MAFF 303099)).